Here is a 185-residue protein sequence, read N- to C-terminus: Casparian strip membrane protein 5 (185 aa).

The Cytoplasmic portion of the chain corresponds to 1–25 (MKAEAVESGEASTIIAAPKRGINRG). The chain crosses the membrane as a helical span at residues 26 to 46 (ISIADLILRGVAAIGTFASAL). The Extracellular portion of the chain corresponds to 47-75 (TMGTTSETLTIFTQPIMIRAKYNDLPSLT). A helical membrane pass occupies residues 76-96 (FFVIANSIVCGYLVLSIPLSI). Over 97-108 (SHFIRREARITR) the chain is Cytoplasmic. Residues 109-129 (IILVIFDTAMVELLTAGASAA) form a helical membrane-spanning segment. Over 130-160 (TVVVYLAHKRNANWLAICQQFNNFCERISGS) the chain is Extracellular. A helical membrane pass occupies residues 161–181 (LIGSFASIIMIMLIIITSAVA). Residues 182 to 185 (LSRH) lie on the Cytoplasmic side of the membrane.

The protein belongs to the Casparian strip membrane proteins (CASP) family. Homodimer and heterodimers.

The protein resides in the cell membrane. Functionally, regulates membrane-cell wall junctions and localized cell wall deposition. Required for establishment of the Casparian strip membrane domain (CSD) and the subsequent formation of Casparian strips, a cell wall modification of the root endodermis that determines an apoplastic barrier between the intraorganismal apoplasm and the extraorganismal apoplasm and prevents lateral diffusion. The polypeptide is Casparian strip membrane protein 5 (Populus trichocarpa (Western balsam poplar)).